The chain runs to 1332 residues: SAGA complex subunit SPT7 (1332 aa).

T78 bears the Phosphothreonine; by ATM or ATR mark. Disordered stretches follow at residues 80–118, 209–268, and 331–384; these read EEEH…ISNE, VEEK…ISSS, and IEKG…PKQS. S88 is modified (phosphoserine). Over residues 106 to 118 the composition is skewed to low complexity; that stretch reads NNNTNTNTSISNE. The segment covering 217–233 has biased composition (basic and acidic residues); it reads IGKNEKPQNKEGISKFA. Residues 234 to 249 show a composition bias toward acidic residues; the sequence is EDEDYDDEDENYDEDS. Residues 250 to 260 are compositionally biased toward basic and acidic residues; it reads TDVKNVDDPPK. Residues 345-360 are compositionally biased toward acidic residues; the sequence is AATDEQDRENTNDEPD. A compositionally biased stretch (polar residues) spans 362–376; sequence NQKLPTPEGSTFSDT. One can recognise a Bromo domain in the interval 440–546; that stretch reads IGQEELYEAC…KKSLQLIRMI (107 aa). Residues 566–578 are compositionally biased toward acidic residues; that stretch reads KDKDYELDEEEEV. 2 disordered regions span residues 566–724 and 1286–1332; these read KDKD…YLLE and GAEN…RLNQ. Basic and acidic residues-rich tracts occupy residues 593–634 and 644–697; these read LAKE…KDKT and NVNK…KEAG. Positions 698–716 are enriched in acidic residues; the sequence is ENNEEEEDDDDEDEDEDMV. S1293 is subject to Phosphoserine. Polar residues predominate over residues 1316–1332; sequence NMGSNSSFSLSLPRLNQ.

As to quaternary structure, component of the 1.8 MDa SAGA (Spt-Ada-Gcn5 acetyltransferase) complex, which is composed of 19 subunits TRA1, SPT7, TAF5, NGG1/ADA3, SGF73, SPT20/ADA5, SPT8, TAF12, TAF6, HFI1/ADA1, UBP8, GCN5, ADA2, SPT3, SGF29, TAF10, TAF9, SGF11 and SUS1. The SAGA complex is composed of 4 modules, namely the HAT (histone acetyltransferase) module (GCN5, ADA2, NGG1/ADA3 and SGF29), the DUB (deubiquitinating) module (UBP8, SGF11, SGF73 and SUS1), the core or TAF (TBP-associated factor) module (TAF5, TAF6, TAF9, TAF10 and TAF12), and the Tra1 or SPT (Suppressor of Ty) module (TRA1, HFI1/ADA1, SPT3, SPT7, SPT8 and SPT20/ADA5). The Tra1/SPT module binds activators, the core module recruits TBP (TATA-binding protein), the HAT module contains the histone H3 acetyltransferase GCN5, and the DUB module comprises the histone H2B deubiquitinase UBP8. Also identified in an altered form of SAGA, named SALSA (SAGA altered, Spt8 absent) or SLIK (SAGA-like) complex, which contains a C-terminal truncated form of SPT7 and is missing SPT8. However, it has been shown that the SAGA and SAGA-like SALSA/SLIK transcriptional coactivators are structurally and biochemically equivalent. Identified in the Ada.spt complex with NGG1/ADA3 and TRA1. Protease PEP4 directly cleaves the C-terminus of SPT7(SAGA) to form SPT7(SLIK) within the SAGA complex in the nucleus.

It localises to the nucleus. Functionally, component of the transcription coactivator SAGA complex. SAGA acts as a general cofactor required for essentially all RNA polymerase II transcription. At the promoters, SAGA is required for transcription pre-initiation complex (PIC) recruitment. It influences RNA polymerase II transcriptional activity through different activities such as TBP interaction (via core/TAF module) and promoter selectivity, interaction with transcription activators (via Tra1/SPT module), and chromatin modification through histone acetylation (via HAT module) and deubiquitination (via DUB module). SAGA preferentially acetylates histones H3 (to form H3K9ac, H3K14ac, H3K18ac and H3K23ac) and H2B and deubiquitinates histone H2B. SAGA interacts with DNA via upstream activating sequences (UASs). Also identified in a modified version of SAGA named SALSA or SLIK. The cleavage of SPT7 and the absence of the SPT8 subunit in SLIK neither drive any major conformational differences in its structure compared with SAGA, nor significantly affect HAT, DUB, or DNA-binding activities. In Saccharomyces cerevisiae (strain ATCC 204508 / S288c) (Baker's yeast), this protein is SAGA complex subunit SPT7 (SPT7).